The chain runs to 270 residues: Ribosomal RNA small subunit methyltransferase A (270 aa).

Asparagine 18, leucine 20, glycine 45, glutamate 66, aspartate 91, and asparagine 112 together coordinate S-adenosyl-L-methionine.

It belongs to the class I-like SAM-binding methyltransferase superfamily. rRNA adenine N(6)-methyltransferase family. RsmA subfamily.

Its subcellular location is the cytoplasm. The enzyme catalyses adenosine(1518)/adenosine(1519) in 16S rRNA + 4 S-adenosyl-L-methionine = N(6)-dimethyladenosine(1518)/N(6)-dimethyladenosine(1519) in 16S rRNA + 4 S-adenosyl-L-homocysteine + 4 H(+). Functionally, specifically dimethylates two adjacent adenosines (A1518 and A1519) in the loop of a conserved hairpin near the 3'-end of 16S rRNA in the 30S particle. May play a critical role in biogenesis of 30S subunits. This is Ribosomal RNA small subunit methyltransferase A from Shewanella piezotolerans (strain WP3 / JCM 13877).